A 361-amino-acid chain; its full sequence is Outer mitochondrial transmembrane helix translocase (361 aa).

The Mitochondrial intermembrane segment spans residues M1 to E15. Residues V16 to F32 form a helical membrane-spanning segment. Topologically, residues T33 to D361 are cytoplasmic. G133–T140 is an ATP binding site. Residue S322 is modified to Phosphoserine.

Belongs to the AAA ATPase family. MSP1 subfamily. In terms of assembly, interacts with GRIA2 and GRIP1 in an ATP-dependent manner. ATAD1-catalyzed ATP hydrolysis disrupts not only its binding to GRIA2 and GRIP1, but also interaction between GRIP1 and GRIA2, leading to AMPAR complex disassembly.

The protein resides in the mitochondrion outer membrane. It is found in the peroxisome membrane. Its subcellular location is the postsynaptic cell membrane. It catalyses the reaction [protein]-with a C-terminal TM segment(out) + ATP + H2O = [protein]-with a C-terminal TM segment(in) + ADP + phosphate + H(+). Outer mitochondrial translocase required to remove mislocalized tail-anchored transmembrane proteins on mitochondria. Specifically recognizes and binds tail-anchored transmembrane proteins: acts as a dislocase that mediates the ATP-dependent extraction of mistargeted tail-anchored transmembrane proteins from the mitochondrion outer membrane. Also plays a critical role in regulating the surface expression of AMPA receptors (AMPAR), thereby regulating synaptic plasticity and learning and memory. Required for NMDA-stimulated AMPAR internalization and inhibition of GRIA1 and GRIA2 recycling back to the plasma membrane; these activities are ATPase-dependent. In Homo sapiens (Human), this protein is Outer mitochondrial transmembrane helix translocase.